The primary structure comprises 200 residues: Segregation and condensation protein B (200 aa).

Belongs to the ScpB family. In terms of assembly, homodimer. Homodimerization may be required to stabilize the binding of ScpA to the Smc head domains. Component of a cohesin-like complex composed of ScpA, ScpB and the Smc homodimer, in which ScpA and ScpB bind to the head domain of Smc. The presence of the three proteins is required for the association of the complex with DNA.

It is found in the cytoplasm. Participates in chromosomal partition during cell division. May act via the formation of a condensin-like complex containing Smc and ScpA that pull DNA away from mid-cell into both cell halves. The protein is Segregation and condensation protein B of Lactobacillus delbrueckii subsp. bulgaricus (strain ATCC 11842 / DSM 20081 / BCRC 10696 / JCM 1002 / NBRC 13953 / NCIMB 11778 / NCTC 12712 / WDCM 00102 / Lb 14).